Consider the following 854-residue polypeptide: Putative Tricorn-like protease C-terminal subunit (854 aa).

Histidine 539 (charge relay system) is an active-site residue. A PDZ-like region spans residues 554–646 (PIGGLGADYE…RVTVKLLKDE (93 aa)). Glycine 709 is a substrate binding site. Catalysis depends on serine 756, which acts as the Nucleophile. Glutamate 814 (charge relay system) is an active-site residue.

It belongs to the peptidase S41B family.

The protein localises to the cytoplasm. Its function is as follows. Degrades oligopeptides in a sequential manner. This is Putative Tricorn-like protease C-terminal subunit (triC) from Sulfurisphaera tokodaii (strain DSM 16993 / JCM 10545 / NBRC 100140 / 7) (Sulfolobus tokodaii).